Consider the following 318-residue polypeptide: Olfactory receptor 51E1 (318 aa).

Topologically, residues 1–31 are extracellular; sequence MMVDPNGNESSATYFILIGLPGLEEAQFWLA. Residue Asn-8 is glycosylated (N-linked (GlcNAc...) asparagine). The helical transmembrane segment at 32–52 threads the bilayer; it reads FPLCSLYLIAVLGNLTIIYIV. The Cytoplasmic segment spans residues 53 to 60; that stretch reads RTEHSLHE. A helical membrane pass occupies residues 61–81; sequence PMYIFLCMLSGIDILISTSSM. The Extracellular portion of the chain corresponds to 82 to 100; sequence PKMLAIFWFNSTTIQFDAC. A glycan (N-linked (GlcNAc...) asparagine) is linked at Asn-91. The cysteines at positions 100 and 182 are disulfide-linked. A helical membrane pass occupies residues 101 to 123; that stretch reads LLQMFAIHSLSGMESTVLLAMAF. Topologically, residues 124–145 are cytoplasmic; the sequence is DRYVAICHPLRHATVLTLPRVT. A helical transmembrane segment spans residues 146–166; the sequence is KIGVAAVVRGAALMAPLPVFI. Residues 167–198 are Extracellular-facing; sequence KQLPFCRSNILSHSYCLHQDVMKLACDDIRVN. Residues 199–219 traverse the membrane as a helical segment; it reads VVYGLIVIISAIGLDSLLISF. The Cytoplasmic portion of the chain corresponds to 220–239; the sequence is SYLLILKTVLGLTREAQAKA. The helical transmembrane segment at 240-260 threads the bilayer; it reads FGTCVSHVCAVFIFYVPFIGL. The Extracellular portion of the chain corresponds to 261-275; the sequence is SMVHRFSKRRDSPLP. The helical transmembrane segment at 276 to 296 threads the bilayer; sequence VILANIYLLVPPVLNPIVYGV. The Cytoplasmic segment spans residues 297–318; sequence KTKEIRQRILRLFHVATHASEP.

Belongs to the G-protein coupled receptor 1 family. In terms of tissue distribution, highly expressed in prostate. Very low levels may be detected in some other tissues, such as placenta, skeletal muscle, heart, ovary and testis. Up-regulated in prostate cancers.

Its subcellular location is the cell membrane. Odorant receptor. This is Olfactory receptor 51E1 (OR51E1) from Homo sapiens (Human).